The sequence spans 305 residues: MSVRHFLSFMDYSPEELIGLIRRGSELKDLRNRGVLYEPLKSRVLGMVFEKASTRTRLSFEAGMIQLGGQAIFLSPRDTQLGRGEPIGDSARVMSRMLDGVMIRTFAHATLTEFAAHSKVPVINGLSDDLHPCQLLADMQTFHEHRGSIQGKTVAWIGDGNNMCNSYIEAALKFDFQLRVACPEGYEPKAEFVALAGDRLRVVRDPREAVAGAHLVSTDVWASMGQEDEAAARIALFRPYQVNAALLDGAADDVLFMHCLPAHRGEEISEELLDDPRSVAWDQAENRLHAQKALLELLIEHAHYA.

Carbamoyl phosphate-binding positions include 53 to 56 (STRT), Gln80, Arg104, and 131 to 134 (HPCQ). Residues Asn162, Asp219, and 223–224 (SM) each bind L-ornithine. Residues 259–260 (CL) and Arg287 contribute to the carbamoyl phosphate site.

Belongs to the aspartate/ornithine carbamoyltransferase superfamily. OTCase family. As to quaternary structure, homotrimer.

It localises to the cytoplasm. The enzyme catalyses carbamoyl phosphate + L-ornithine = L-citrulline + phosphate + H(+). It functions in the pathway amino-acid biosynthesis; L-arginine biosynthesis; L-arginine from L-ornithine and carbamoyl phosphate: step 1/3. Functionally, reversibly catalyzes the transfer of the carbamoyl group from carbamoyl phosphate (CP) to the N(epsilon) atom of ornithine (ORN) to produce L-citrulline, which is a substrate for argininosuccinate synthetase (ArgG) involved in the final step in arginine biosynthesis. This Pseudomonas aeruginosa (strain ATCC 15692 / DSM 22644 / CIP 104116 / JCM 14847 / LMG 12228 / 1C / PRS 101 / PAO1) protein is Ornithine carbamoyltransferase, anabolic.